Reading from the N-terminus, the 187-residue chain is ECF RNA polymerase sigma factor SigW (187 aa).

The sigma-70 factor domain-2 stretch occupies residues 3–95; the sequence is MMIKKRIKQV…RKKKPDYYLD (93 aa). Residues 47–50 carry the Polymerase core binding motif; that stretch reads DIAQ. The sigma-70 factor domain-4 stretch occupies residues 125–187; the sequence is ELSNTIQQKI…EALRKQLRDL (63 aa). Positions 166–184 form a DNA-binding region, H-T-H motif; that stretch reads VGTVKTRIHRGREALRKQL.

This sequence belongs to the sigma-70 factor family. ECF subfamily. Interacts transiently with the RNA polymerase catalytic core formed by RpoA, RpoB, RpoC and RpoZ (2 alpha, 1 beta, 1 beta' and 1 omega subunit) to form the RNA polymerase holoenzyme that can initiate transcription. Forms a heterodimer with cognate anti-sigma factor RsiW, which prevents it from binding to the -10 and -35 promoter elements.

Extracytoplasmic function (ECF) sigma factors are held in an inactive form by a cognate anti-sigma factor (RsiW for this protein) until released by regulated membrane proteolysis (RIP). RIP occurs when an extracytoplasmic signal (envelope stress) triggers a concerted proteolytic cascade to transmit information and elicit cellular responses. The anti-sigma factor RsiW is a membrane protein, binding sigma-W in the cytoplasm. RsiW is first cut extracytoplasmically (site-1 protease, S1P, by PrsW), then within the membrane itself (site-2 protease, S2P, by RasP), while cytoplasmic proteases (predominantly ClpX-ClpP) finish degrading the regulatory protein, liberating sigma-W. Sigma factors are initiation factors that promote the attachment of RNA polymerase (RNAP) to specific initiation sites and are then released. Sigma-W controls genes involved in response to cell envelope stress such as antimicrobial peptides, alkaline pH, transport processes and detoxification. In Bacillus subtilis (strain 168), this protein is ECF RNA polymerase sigma factor SigW (sigW).